We begin with the raw amino-acid sequence, 236 residues long: Uridylate kinase (236 aa).

ATP is bound at residue 12-15 (KISG). The segment at 20 to 25 (GTNGYG) is involved in allosteric activation by GTP. G54 contributes to the UMP binding site. ATP is bound by residues G55 and R59. UMP-binding positions include D72 and 133-140 (TGNPYFST). The ATP site is built by Y166 and D169.

It belongs to the UMP kinase family. Homohexamer.

The protein localises to the cytoplasm. The catalysed reaction is UMP + ATP = UDP + ADP. The protein operates within pyrimidine metabolism; CTP biosynthesis via de novo pathway; UDP from UMP (UMPK route): step 1/1. Allosterically activated by GTP. Inhibited by UTP. Catalyzes the reversible phosphorylation of UMP to UDP. This chain is Uridylate kinase, found in Clostridium acetobutylicum (strain ATCC 824 / DSM 792 / JCM 1419 / IAM 19013 / LMG 5710 / NBRC 13948 / NRRL B-527 / VKM B-1787 / 2291 / W).